A 565-amino-acid polypeptide reads, in one-letter code: Oxygen-dependent choline dehydrogenase (565 aa).

7-36 (DYIICGAGSAGNVLATRLTEDPGVTVLLLE) provides a ligand contact to FAD. The active-site Proton acceptor is the H474.

The protein belongs to the GMC oxidoreductase family. Requires FAD as cofactor.

The enzyme catalyses choline + A = betaine aldehyde + AH2. It carries out the reaction betaine aldehyde + NAD(+) + H2O = glycine betaine + NADH + 2 H(+). Its pathway is amine and polyamine biosynthesis; betaine biosynthesis via choline pathway; betaine aldehyde from choline (cytochrome c reductase route): step 1/1. Involved in the biosynthesis of the osmoprotectant glycine betaine. Catalyzes the oxidation of choline to betaine aldehyde and betaine aldehyde to glycine betaine at the same rate. This Burkholderia mallei (strain ATCC 23344) protein is Oxygen-dependent choline dehydrogenase.